We begin with the raw amino-acid sequence, 411 residues long: Glucose-1-phosphate adenylyltransferase (411 aa).

Alpha-D-glucose 1-phosphate contacts are provided by residues G164, 179–180 (EK), and S197.

The protein belongs to the bacterial/plant glucose-1-phosphate adenylyltransferase family. Homotetramer.

The catalysed reaction is alpha-D-glucose 1-phosphate + ATP + H(+) = ADP-alpha-D-glucose + diphosphate. The protein operates within glycan biosynthesis; glycogen biosynthesis. Its function is as follows. Involved in the biosynthesis of ADP-glucose, a building block required for the elongation reactions to produce glycogen. Catalyzes the reaction between ATP and alpha-D-glucose 1-phosphate (G1P) to produce pyrophosphate and ADP-Glc. The sequence is that of Glucose-1-phosphate adenylyltransferase from Corynebacterium kroppenstedtii (strain DSM 44385 / JCM 11950 / CIP 105744 / CCUG 35717).